A 242-amino-acid chain; its full sequence is Tryptophan synthase alpha chain (242 aa).

Catalysis depends on proton acceptor residues Glu32 and Asp43.

This sequence belongs to the TrpA family. In terms of assembly, tetramer of two alpha and two beta chains.

It is found in the plastid. It localises to the chloroplast. It carries out the reaction (1S,2R)-1-C-(indol-3-yl)glycerol 3-phosphate + L-serine = D-glyceraldehyde 3-phosphate + L-tryptophan + H2O. Its pathway is amino-acid biosynthesis; L-tryptophan biosynthesis; L-tryptophan from chorismate: step 5/5. Its function is as follows. The alpha subunit is responsible for the aldol cleavage of indoleglycerol phosphate to indole and glyceraldehyde 3-phosphate. The polypeptide is Tryptophan synthase alpha chain (Cyanidium caldarium (Red alga)).